The following is a 283-amino-acid chain: Tyrosine recombinase THA_404 (283 aa).

In terms of domain architecture, Core-binding (CB) spans 1–86 (MDKVIEMFSD…SLNSFFNYLE (86 aa)). Residues 107–281 (KIPDFLTEDE…ADQEKFDAVK (175 aa)) enclose the Tyr recombinase domain. Residues Arg145, Lys170, His233, Arg236, and His259 contribute to the active site. Tyr268 (O-(3'-phospho-DNA)-tyrosine intermediate) is an active-site residue.

This sequence belongs to the 'phage' integrase family.

It localises to the cytoplasm. Its function is as follows. Site-specific tyrosine recombinase, which acts by catalyzing the cutting and rejoining of the recombining DNA molecules. This is Tyrosine recombinase THA_404 from Thermosipho africanus (strain TCF52B).